The chain runs to 1567 residues: Ice nucleation protein (1567 aa).

The segment covering 130-185 (PAAEPSAPATQATSATLPTPATPSTQATPSTQSTQSTQSTEATQSTEATPVATVAA) has biased composition (low complexity). Disordered stretches follow at residues 130–195 (PAAE…QQHD), 270–329 (YGST…KGSD), 356–378 (AGSE…GSDV), 449–474 (TQTS…GSDI), 502–529 (SESS…YGST), 594–620 (QTAG…DVTA), 642–668 (QTSG…DVTA), 689–716 (TQTS…DVTA), 738–764 (QTSG…DVTA), 785–810 (TQTS…GSDI), 833–860 (TQTS…DVTA), 929–959 (TQTS…AGYG), and 977–1004 (TQTS…DVTA). The span at 270 to 282 (YGSTQTAQEGSRL) shows a compositional bias: polar residues. Low complexity predominate over residues 283 to 296 (TSGYGSTATSGSDS). Polar residues-rich tracts occupy residues 302–325 (YGST…QTAR), 356–373 (AGSE…QTAR), 449–469 (TQTS…QTAR), and 502–519 (SESS…AQQD). Low complexity predominate over residues 520 to 529 (SSLTTGYGST). Composition is skewed to polar residues over residues 594–613 (QTAG…QTAR), 642–661 (QTSG…QTAR), 689–709 (TQTS…QTAR), 738–757 (QTSG…QTAR), 785–805 (TQTS…QTAR), 833–853 (TQTS…QTAR), 929–949 (TQTS…QTAR), and 977–997 (TQTS…QTAR).

This sequence belongs to the bacterial ice nucleation protein family.

Its subcellular location is the cell outer membrane. Its function is as follows. Ice nucleation proteins enable bacteria to nucleate crystallization in supercooled water. This is Ice nucleation protein (inaX) from Xanthomonas campestris pv. translucens.